The chain runs to 95 residues: Signal recognition particle 19 kDa protein (95 aa).

This sequence belongs to the SRP19 family. Part of the signal recognition particle protein translocation system, which is composed of SRP and FtsY. Archaeal SRP consists of a 7S RNA molecule of 300 nucleotides and two protein subunits: SRP54 and SRP19.

The protein localises to the cytoplasm. Functionally, involved in targeting and insertion of nascent membrane proteins into the cytoplasmic membrane. Binds directly to 7S RNA and mediates binding of the 54 kDa subunit of the SRP. The chain is Signal recognition particle 19 kDa protein from Pyrobaculum islandicum (strain DSM 4184 / JCM 9189 / GEO3).